Here is a 246-residue protein sequence, read N- to C-terminus: MISDSMTVEEIRLHLGLALKEKDFVVDKTGVKTIEIIGASFVADEPFIFGALNDEYIQRELEWYKSKSLFVKDIPGETPKIWQQVASSKGEINSNYGWAIWSEDNYAQYDMCLAELGQNPDSRRGIMIYTRPSMQFDYNKDGMSDFMCTNTVQYLIRDKKINAVVNMRSNDVVFGFRNDYAWQKYVLDKLVSDLNAGDSTRQYKAGSIIWNVGSLHVYSRHFYLVDHWWKTGETHISKKDYVGKYA.

C148 is a catalytic residue.

It belongs to the thymidylate synthase family.

The enzyme catalyses dCMP + (6R)-5,10-methylene-5,6,7,8-tetrahydrofolate + H2O = 5-hydroxymethyl-dCMP + (6S)-5,6,7,8-tetrahydrofolate. This is Deoxycytidylate 5-hydroxymethyltransferase (42) from Enterobacteria phage T4 (Bacteriophage T4).